The primary structure comprises 545 residues: Sterol O-acyltransferase 1 (545 aa).

The residue at position 1 (M1) is an N-acetylmethionine. Positions 1 to 24 (MVGEETSLRNRLSRSAENPEQDEA) are disordered. The Cytoplasmic segment spans residues 1 to 133 (MVGEETSLRN…LDELFEVDHI (133 aa)). S7 carries the post-translational modification Phosphoserine. Residues 9 to 18 (RNRLSRSAEN) are compositionally biased toward polar residues. H132 is a cholesterol binding site. A helical membrane pass occupies residues 134 to 155 (RTIYHMFIALLIIFILSTLVVD). Residues 156-175 (YIDEGRLVLEFSLLAYAFGQ) lie on the Lumenal side of the membrane. Residues 176-201 (FPIVIWTWWAMFLSTLAIPYFLFQRW) traverse the membrane as a helical segment. Residues 202–213 (AHGYSKSSHPLI) are Cytoplasmic-facing. A helical transmembrane segment spans residues 214–239 (YSLIHGAFFLVFQLGILGFIPTYVVL). The Lumenal segment spans residues 240 to 247 (AYTLPPAS). A helical transmembrane segment spans residues 248-271 (RFILILEQIRLVMKAHSYVRENVP). Residues 272-314 (RVLSAAKEKSSTVPVPTVNQYLYFLFAPTLIYRDSYPRTPTVR) lie on the Cytoplasmic side of the membrane. A helical transmembrane segment spans residues 315-347 (WGYVAMQFLQVFGCLFYVYYIFERLCAPLFRNI). Residues 348–364 (KQEPFSARVLVLCVFNS) are Lumenal-facing. Residues 365-390 (ILPGVLMLFLSFFAFLHCWLNAFAEM) form a helical membrane-spanning segment. Over 391 to 438 (LRFGDRMFYKDWWNSTSYSNYYRTWNVVVHDWLYYYVYKDLLWFFSKR) the chain is Cytoplasmic. The FYXDWWN motif motif lies at 398–404 (FYKDWWN). An acyl-CoA is bound by residues N410, R413, N416, H420, Y428, and S451. The helical transmembrane segment at 439 to 463 (FRPAAMLAVFALSAVVHEYALAVCL) threads the bilayer. The active site involves H455. Residues 464 to 469 (SYFYPV) are Lumenal-facing. A helical transmembrane segment spans residues 470 to 485 (LFVLFMFFGMAFNFIV). Topologically, residues 486–491 (NDSRKR) are cytoplasmic. The chain crosses the membrane as a helical span at residues 492–523 (PVWNIMVRASLFLGHGVILCFYSQEWYARQRC). C523 and C541 are oxidised to a cystine. Topologically, residues 524–545 (PLKNPTFLDYVRPRTWTCRYVF) are lumenal.

It belongs to the membrane-bound acyltransferase family. Sterol o-acyltransferase subfamily. May form homo- or heterodimers. Interacts with UBIAD1.

It localises to the endoplasmic reticulum membrane. The catalysed reaction is a sterol + a long-chain fatty acyl-CoA = a long-chain 3-hydroxysterol ester + CoA. The enzyme catalyses cholesterol + an acyl-CoA = a cholesterol ester + CoA. It carries out the reaction cholesterol + (9Z)-octadecenoyl-CoA = cholesteryl (9Z-octadecenoate) + CoA. It catalyses the reaction cholesterol + hexadecanoyl-CoA = cholesteryl hexadecanoate + CoA. The catalysed reaction is octadecanoyl-CoA + cholesterol = cholesteryl octadecanoate + CoA. The enzyme catalyses (9Z,12Z)-octadecadienoyl-CoA + cholesterol = cholesteryl (9Z,12Z)-octadecadienoate + CoA. It carries out the reaction (5Z,8Z,11Z,14Z)-eicosatetraenoyl-CoA + cholesterol = cholesteryl (5Z,8Z,11Z,14Z)-eicosatetraenoate + CoA. It catalyses the reaction (9Z)-hexadecenoyl-CoA + cholesterol = cholesteryl (9Z)-hexadecenoate + CoA. The catalysed reaction is (11Z)-octadecenoyl-CoA + cholesterol = cholesteryl (11Z)-octadecenoate + CoA. The enzyme catalyses (7Z)-octadecenoyl-CoA + cholesterol = cholesteryl (7Z)-octadecenoate + CoA. Its function is as follows. Catalyzes the formation of fatty acid-cholesterol esters, which are less soluble in membranes than cholesterol. Plays a role in lipoprotein assembly and dietary cholesterol absorption. Preferentially utilizes oleoyl-CoA ((9Z)-octadecenoyl-CoA) as substrate: shows a higher activity towards an acyl-CoA substrate with a double bond at the delta-9 position (9Z) than towards saturated acyl-CoA or an unsaturated acyl-CoA with a double bond at the delta-7 (7Z) or delta-11 (11Z) positions. The sequence is that of Sterol O-acyltransferase 1 from Rattus norvegicus (Rat).